A 396-amino-acid polypeptide reads, in one-letter code: Ornithine aminotransferase (396 aa).

An N6-(pyridoxal phosphate)lysine modification is found at lysine 255.

This sequence belongs to the class-III pyridoxal-phosphate-dependent aminotransferase family. OAT subfamily. Pyridoxal 5'-phosphate is required as a cofactor.

It localises to the cytoplasm. It catalyses the reaction a 2-oxocarboxylate + L-ornithine = L-glutamate 5-semialdehyde + an L-alpha-amino acid. The protein operates within amino-acid biosynthesis; L-proline biosynthesis; L-glutamate 5-semialdehyde from L-ornithine: step 1/1. Catalyzes the interconversion of ornithine to glutamate semialdehyde. This Bacillus anthracis (strain A0248) protein is Ornithine aminotransferase.